Reading from the N-terminus, the 561-residue chain is Guanine nucleotide-binding protein-like 3 (561 aa).

Residues 28–46 are compositionally biased toward basic residues; sequence HNRKLKKAAKKQGISRKAK. Disordered regions lie at residues 28-58 and 76-110; these read HNRK…APFK and KEQN…KKAK. A coiled-coil region spans residues 53–98; the sequence is NSAPFKEEVLREAEQRKQELETLKEQNKIVKQQEKAAKRKKEKDAA. Residues 76-88 show a composition bias toward basic and acidic residues; it reads KEQNKIVKQQEKA. Residues 133–319 form the CP-type G domain; sequence CQELNKVIEA…MIDSPGILAA (187 aa). GTP contacts are provided by residues 181–184, 268–275, and 312–315; these read NKID, GFPNVGKS, and DSPG. The interval 486–532 is disordered; sequence ATTTDAEEEKMDTTTNTDEPEAESHISSTVEPIQEPTEKRKDKPAKE. Basic and acidic residues predominate over residues 521–532; sequence PTEKRKDKPAKE.

The protein belongs to the TRAFAC class YlqF/YawG GTPase family.

The protein resides in the nucleus. It localises to the nucleolus. Its function is as follows. May play a role in regulating cellular proliferation. The protein is Guanine nucleotide-binding protein-like 3 (gnl3) of Danio rerio (Zebrafish).